Here is a 643-residue protein sequence, read N- to C-terminus: 1-deoxy-D-xylulose-5-phosphate synthase (643 aa).

Thiamine diphosphate is bound by residues H78 and 119–121 (AHS). D150 is a Mg(2+) binding site. Thiamine diphosphate-binding positions include 151-152 (GS), N179, Y288, and E370. N179 is a Mg(2+) binding site.

This sequence belongs to the transketolase family. DXPS subfamily. Homodimer. It depends on Mg(2+) as a cofactor. The cofactor is thiamine diphosphate.

It carries out the reaction D-glyceraldehyde 3-phosphate + pyruvate + H(+) = 1-deoxy-D-xylulose 5-phosphate + CO2. Its pathway is metabolic intermediate biosynthesis; 1-deoxy-D-xylulose 5-phosphate biosynthesis; 1-deoxy-D-xylulose 5-phosphate from D-glyceraldehyde 3-phosphate and pyruvate: step 1/1. Functionally, catalyzes the acyloin condensation reaction between C atoms 2 and 3 of pyruvate and glyceraldehyde 3-phosphate to yield 1-deoxy-D-xylulose-5-phosphate (DXP). In Brucella abortus (strain S19), this protein is 1-deoxy-D-xylulose-5-phosphate synthase.